A 428-amino-acid polypeptide reads, in one-letter code: Adenylosuccinate synthetase (428 aa).

GTP contacts are provided by residues 12 to 18 (GDEGKGK) and 40 to 42 (GHT). D13 (proton acceptor) is an active-site residue. Residues D13 and G40 each coordinate Mg(2+). IMP contacts are provided by residues 13-16 (DEGK), 38-41 (NAGH), T128, R142, Q223, T238, and R302. H41 acts as the Proton donor in catalysis. A substrate-binding site is contributed by 298-304 (TTTGRPR). GTP contacts are provided by residues R304, 330 to 332 (KLD), and 412 to 414 (GVG).

Belongs to the adenylosuccinate synthetase family. Homodimer. Mg(2+) serves as cofactor.

Its subcellular location is the cytoplasm. It catalyses the reaction IMP + L-aspartate + GTP = N(6)-(1,2-dicarboxyethyl)-AMP + GDP + phosphate + 2 H(+). The protein operates within purine metabolism; AMP biosynthesis via de novo pathway; AMP from IMP: step 1/2. In terms of biological role, plays an important role in the de novo pathway of purine nucleotide biosynthesis. Catalyzes the first committed step in the biosynthesis of AMP from IMP. This is Adenylosuccinate synthetase from Kineococcus radiotolerans (strain ATCC BAA-149 / DSM 14245 / SRS30216).